The primary structure comprises 568 residues: Protein NDNF (568 aa).

Residues 1–19 form the signal peptide; sequence MVLLHWCLLWLLFPLSSRT. 2 consecutive Fibronectin type-III domains span residues 261 to 331 and 445 to 564; these read NSGK…VGTF and PSLP…VVKT. An N-linked (GlcNAc...) asparagine glycan is attached at Asn322.

As to quaternary structure, binds heparin and chondroitin sulfate. Post-translationally, O-glycosylated; contains heparan sulfate and chondroitin sulfate. N-glycosylated. Expressed in neurons along the gonadotropin-releasing hormone (GnRH) expressing neurons migratory route.

It is found in the secreted. Its function is as follows. Secretory protein that plays a role in various cellular processes. Acts as a chemorepellent acting on gonadotropin-releasing hormone (GnRH) expressing neurons regulating their migration to the hypothalamus. Also promotes neuron migration, growth and survival as well as neurite outgrowth and is involved in the development of the olfactory system. May also act through the regulation of growth factors activity and downstream signaling. Also regulates extracellular matrix assembly and cell adhesiveness. Promotes endothelial cell survival, vessel formation and plays an important role in the process of revascularization through NOS3-dependent mechanisms. The polypeptide is Protein NDNF (NDNF) (Homo sapiens (Human)).